The sequence spans 434 residues: DNA primase large subunit PriL (434 aa).

Residues Cys281, Cys392, Cys403, and Cys409 each contribute to the [4Fe-4S] cluster site.

It belongs to the eukaryotic-type primase large subunit family. As to quaternary structure, heterodimer of a small subunit (PriS) and a large subunit (PriL). The cofactor is [4Fe-4S] cluster.

In terms of biological role, regulatory subunit of DNA primase, an RNA polymerase that catalyzes the synthesis of short RNA molecules used as primers for DNA polymerase during DNA replication. Stabilizes and modulates the activity of the small subunit, increasing the rate of DNA synthesis, and conferring RNA synthesis capability. The DNA polymerase activity may enable DNA primase to also catalyze primer extension after primer synthesis. May also play a role in DNA repair. The protein is DNA primase large subunit PriL of Methanothermobacter thermautotrophicus (strain ATCC 29096 / DSM 1053 / JCM 10044 / NBRC 100330 / Delta H) (Methanobacterium thermoautotrophicum).